A 338-amino-acid chain; its full sequence is Anthranilate phosphoribosyltransferase (338 aa).

5-phospho-alpha-D-ribose 1-diphosphate is bound by residues glycine 78, 81–82 (GD), serine 86, 88–91 (NIST), 106–114 (KHGNKSITS), and serine 118. Glycine 78 provides a ligand contact to anthranilate. Serine 90 provides a ligand contact to Mg(2+). Asparagine 109 provides a ligand contact to anthranilate. Residue arginine 163 participates in anthranilate binding. The Mg(2+) site is built by aspartate 222 and glutamate 223.

Belongs to the anthranilate phosphoribosyltransferase family. As to quaternary structure, homodimer. Requires Mg(2+) as cofactor.

It catalyses the reaction N-(5-phospho-beta-D-ribosyl)anthranilate + diphosphate = 5-phospho-alpha-D-ribose 1-diphosphate + anthranilate. Its pathway is amino-acid biosynthesis; L-tryptophan biosynthesis; L-tryptophan from chorismate: step 2/5. In terms of biological role, catalyzes the transfer of the phosphoribosyl group of 5-phosphorylribose-1-pyrophosphate (PRPP) to anthranilate to yield N-(5'-phosphoribosyl)-anthranilate (PRA). This Staphylococcus carnosus (strain TM300) protein is Anthranilate phosphoribosyltransferase.